The following is a 370-amino-acid chain: 3-isopropylmalate dehydrogenase (370 aa).

77–90 (GPKWDSVPYEVRPE) provides a ligand contact to NAD(+). Substrate is bound by residues Arg-97, Arg-107, Arg-135, and Asp-226. Asp-226, Asp-250, and Asp-254 together coordinate Mg(2+). NAD(+) is bound at residue 290 to 302 (GSAPDIAGKGIAN).

It belongs to the isocitrate and isopropylmalate dehydrogenases family. LeuB type 1 subfamily. In terms of assembly, homodimer. The cofactor is Mg(2+). Requires Mn(2+) as cofactor.

Its subcellular location is the cytoplasm. The catalysed reaction is (2R,3S)-3-isopropylmalate + NAD(+) = 4-methyl-2-oxopentanoate + CO2 + NADH. Its pathway is amino-acid biosynthesis; L-leucine biosynthesis; L-leucine from 3-methyl-2-oxobutanoate: step 3/4. Its function is as follows. Catalyzes the oxidation of 3-carboxy-2-hydroxy-4-methylpentanoate (3-isopropylmalate) to 3-carboxy-4-methyl-2-oxopentanoate. The product decarboxylates to 4-methyl-2 oxopentanoate. The sequence is that of 3-isopropylmalate dehydrogenase from Brucella abortus (strain 2308).